An 803-amino-acid chain; its full sequence is Zinc finger X-linked protein ZXDB (803 aa).

3 disordered regions span residues M1–D91, E120–T140, and A218–G260. Gly residues predominate over residues L13–G26. 10 consecutive C2H2-type zinc fingers follow at residues Y271–H295, F304–H328, F334–H358, F364–H386, Y393–H417, F424–H448, F454–H478, F484–H508, F514–H538, and S547–H572. Residues Y271–D577 are required for interaction with ZXDC. The required for transcriptional activation stretch occupies residues Q576–V703.

Belongs to the ZXD family. As to quaternary structure, self-associates. Interacts with ZXDC and CIITA. In terms of tissue distribution, may be expressed in brain, heart, kidney, liver, lung, muscle and placenta.

The protein resides in the nucleus. Its function is as follows. Cooperates with CIITA to promote transcription of MHC class I and MHC class II genes. This is Zinc finger X-linked protein ZXDB (ZXDB) from Homo sapiens (Human).